A 944-amino-acid polypeptide reads, in one-letter code: Leucine--tRNA ligase 2 (944 aa).

A 'HIGH' region motif is present at residues 36 to 46 (PYPNSPWHIGH). A 'KMSKS' region motif is present at residues 623–627 (KMSKS). K626 contacts ATP.

The protein belongs to the class-I aminoacyl-tRNA synthetase family.

It is found in the cytoplasm. The catalysed reaction is tRNA(Leu) + L-leucine + ATP = L-leucyl-tRNA(Leu) + AMP + diphosphate. In Saccharolobus solfataricus (strain ATCC 35092 / DSM 1617 / JCM 11322 / P2) (Sulfolobus solfataricus), this protein is Leucine--tRNA ligase 2.